Here is a 184-residue protein sequence, read N- to C-terminus: Cytidylate kinase (184 aa).

8-16 (GQPGSGKTT) provides a ligand contact to ATP.

This sequence belongs to the cytidylate kinase family. Type 2 subfamily.

The protein localises to the cytoplasm. It carries out the reaction CMP + ATP = CDP + ADP. It catalyses the reaction dCMP + ATP = dCDP + ADP. The polypeptide is Cytidylate kinase (Pyrobaculum neutrophilum (strain DSM 2338 / JCM 9278 / NBRC 100436 / V24Sta) (Thermoproteus neutrophilus)).